Reading from the N-terminus, the 363-residue chain is Pyrimidine monooxygenase RutA (363 aa).

Residues 49–50 (IK), asparagine 115, glutamate 124, 140–141 (RY), and serine 190 contribute to the FMN site.

This sequence belongs to the NtaA/SnaA/DszA monooxygenase family. RutA subfamily.

It catalyses the reaction uracil + FMNH2 + NADH + O2 = (Z)-3-ureidoacrylate + FMN + NAD(+) + H2O + H(+). It carries out the reaction thymine + FMNH2 + NADH + O2 = (Z)-2-methylureidoacrylate + FMN + NAD(+) + H2O + H(+). Its function is as follows. Catalyzes the pyrimidine ring opening between N-3 and C-4 by an unusual flavin hydroperoxide-catalyzed mechanism, adding oxygen atoms in the process to yield ureidoacrylate peracid, that immediately reacts with FMN forming ureidoacrylate and FMN-N(5)-oxide. The FMN-N(5)-oxide reacts spontaneously with NADH to produce FMN. Requires the flavin reductase RutF to regenerate FMN in vivo. This chain is Pyrimidine monooxygenase RutA, found in Escherichia coli O103:H2 (strain 12009 / EHEC).